A 310-amino-acid chain; its full sequence is GPN-loop GTPase 2 (310 aa).

Alanine 2 bears the N-acetylalanine mark. Residue 19 to 24 (GSGKTT) participates in GTP binding. The Gly-Pro-Asn (GPN)-loop; involved in dimer interface signature appears at 76-78 (GPN). Residue 178 to 181 (SKMD) participates in GTP binding.

This sequence belongs to the GPN-loop GTPase family. Heterodimers with GPN1 or GPN3. Binds to RNA polymerase II (RNAPII).

Its function is as follows. Small GTPase required for proper localization of RNA polymerase II and III (RNAPII and RNAPIII). May act at an RNAP assembly step prior to nuclear import. This Rattus norvegicus (Rat) protein is GPN-loop GTPase 2.